We begin with the raw amino-acid sequence, 113 residues long: UPF0482 protein KPK_2871 (113 aa).

The N-terminal stretch at 1 to 28 is a signal peptide; the sequence is MNMTLNKRWCLTAILALSAVVYTSSSFA. A disordered region spans residues 38–61; sequence GDSAQSRQQASMEKEQWNDTRSLR. Over residues 39–48 the composition is skewed to polar residues; the sequence is DSAQSRQQAS. The span at 49 to 59 shows a compositional bias: basic and acidic residues; it reads MEKEQWNDTRS.

The protein belongs to the UPF0482 family.

The protein is UPF0482 protein KPK_2871 of Klebsiella pneumoniae (strain 342).